The following is a 796-amino-acid chain: Protocadherin beta-3 (796 aa).

The N-terminal stretch at 1–26 (MEAGGERFLRQRQVLLLFVFLGGSLA) is a signal peptide. Topologically, residues 27-690 (GSESRRYSVA…AQADLLTVYL (664 aa)) are extracellular. Cadherin domains are found at residues 35 to 133 (VAEE…SPVF), 138 to 242 (MHLK…APEF), 247 to 347 (YEVA…PPEL), 352 to 451 (VNSP…APAF), and 456 to 561 (YTLF…SPFV). Asn-169 is a glycosylation site (N-linked (GlcNAc...) asparagine). Residues Asn-418 and Asn-436 are each glycosylated (N-linked (GlcNAc...) asparagine). Asn-567 is a glycosylation site (N-linked (GlcNAc...) asparagine). The region spanning 568–671 (GSAPCTELVP…LVDGFSQPYL (104 aa)) is the Cadherin 6 domain. The helical transmembrane segment at 691–711 (VVALASVSSLFLFSVLLFVAV) threads the bilayer. Residues 712–796 (RLCRRSRAAS…PSFRKSFEFS (85 aa)) are Cytoplasmic-facing.

It localises to the cell membrane. Its function is as follows. Potential calcium-dependent cell-adhesion protein. May be involved in the establishment and maintenance of specific neuronal connections in the brain. This Homo sapiens (Human) protein is Protocadherin beta-3 (PCDHB3).